The chain runs to 319 residues: Acetyl-coenzyme A carboxylase carboxyl transferase subunit alpha (319 aa).

In terms of domain architecture, CoA carboxyltransferase C-terminal spans 31–292 (EIDSAIRSLR…KTYLSRQLSE (262 aa)).

The protein belongs to the AccA family. In terms of assembly, acetyl-CoA carboxylase is a heterohexamer composed of biotin carboxyl carrier protein (AccB), biotin carboxylase (AccC) and two subunits each of ACCase subunit alpha (AccA) and ACCase subunit beta (AccD).

The protein resides in the cytoplasm. It catalyses the reaction N(6)-carboxybiotinyl-L-lysyl-[protein] + acetyl-CoA = N(6)-biotinyl-L-lysyl-[protein] + malonyl-CoA. It functions in the pathway lipid metabolism; malonyl-CoA biosynthesis; malonyl-CoA from acetyl-CoA: step 1/1. In terms of biological role, component of the acetyl coenzyme A carboxylase (ACC) complex. First, biotin carboxylase catalyzes the carboxylation of biotin on its carrier protein (BCCP) and then the CO(2) group is transferred by the carboxyltransferase to acetyl-CoA to form malonyl-CoA. The protein is Acetyl-coenzyme A carboxylase carboxyl transferase subunit alpha of Rhodopirellula baltica (strain DSM 10527 / NCIMB 13988 / SH1).